Here is a 276-residue protein sequence, read N- to C-terminus: Aliphatic sulfonates import ATP-binding protein SsuB 1 (276 aa).

The tract at residues 1 to 21 (MSTGNVTTLRRPEAPPSLPAG) is disordered. The ABC transporter domain maps to 39–259 (FSFRNVTKSF…RHGTPEFARL (221 aa)). 71–78 (GKSGCGKS) lines the ATP pocket.

The protein belongs to the ABC transporter superfamily. Aliphatic sulfonates importer (TC 3.A.1.17.2) family. In terms of assembly, the complex is composed of two ATP-binding proteins (SsuB), two transmembrane proteins (SsuC) and a solute-binding protein (SsuA).

Its subcellular location is the cell inner membrane. It carries out the reaction ATP + H2O + aliphatic sulfonate-[sulfonate-binding protein]Side 1 = ADP + phosphate + aliphatic sulfonateSide 2 + [sulfonate-binding protein]Side 1.. Functionally, part of the ABC transporter complex SsuABC involved in aliphatic sulfonates import. Responsible for energy coupling to the transport system. The polypeptide is Aliphatic sulfonates import ATP-binding protein SsuB 1 (Agrobacterium fabrum (strain C58 / ATCC 33970) (Agrobacterium tumefaciens (strain C58))).